A 162-amino-acid chain; its full sequence is uncharacterized protein (162 aa).

4 helical membrane-spanning segments follow: residues 10 to 30 (ILSF…MLIL), 50 to 70 (IVEL…ALYN), 96 to 116 (IAQY…IILL), and 125 to 145 (FTAI…LFIF).

The protein resides in the cell membrane. This is an uncharacterized protein from Methanocaldococcus jannaschii (strain ATCC 43067 / DSM 2661 / JAL-1 / JCM 10045 / NBRC 100440) (Methanococcus jannaschii).